A 229-amino-acid chain; its full sequence is 2,3-bisphosphoglycerate-dependent phosphoglycerate mutase (229 aa).

Substrate contacts are provided by residues 8 to 15 (RHGKSEWN), 21 to 22 (TG), Arg-60, 87 to 90 (ERHY), Lys-98, 114 to 115 (RR), and 183 to 184 (GN). His-9 serves as the catalytic Tele-phosphohistidine intermediate. Glu-87 functions as the Proton donor/acceptor in the catalytic mechanism.

The protein belongs to the phosphoglycerate mutase family. BPG-dependent PGAM subfamily. Homodimer.

The enzyme catalyses (2R)-2-phosphoglycerate = (2R)-3-phosphoglycerate. It functions in the pathway carbohydrate degradation; glycolysis; pyruvate from D-glyceraldehyde 3-phosphate: step 3/5. Its function is as follows. Catalyzes the interconversion of 2-phosphoglycerate and 3-phosphoglycerate. In Nautilia profundicola (strain ATCC BAA-1463 / DSM 18972 / AmH), this protein is 2,3-bisphosphoglycerate-dependent phosphoglycerate mutase.